The chain runs to 43 residues: Protein PsbN (43 aa).

A helical transmembrane segment spans residues 4 to 24; it reads GILVVIFISCLLVSFTGYTIY.

It belongs to the PsbN family.

It is found in the plastid. The protein resides in the chloroplast thylakoid membrane. May play a role in photosystem I and II biogenesis. This chain is Protein PsbN, found in Chaetosphaeridium globosum (Charophycean green alga).